Here is a 204-residue protein sequence, read N- to C-terminus: MDRVVLMLSVLSLGVSSQPITDGQRLFSIAVSRVQHLHLLAQRLFSDFESSLQTEEQRQLNKIFLQDFCNSDYIISPIDKHETQRSSVLKLLSISYRLVESWEFPSRSLAGGSAPRNQISPKLSELKTGIHLLIRANEDGAELFPDSSALQLAPYGDYYQSPGTDESLRRTYELLACFKKDMHKVETYLTVAKCRLSPEANCTL.

Positions Met1 to Ser17 are cleaved as a signal peptide. The residue at position 18 (Gln18) is a Pyrrolidone carboxylic acid. His36 lines the Zn(2+) pocket. An intrachain disulfide couples Cys69 to Cys177. Glu186 contacts Zn(2+). A disulfide bond links Cys194 and Cys202.

This sequence belongs to the somatotropin/prolactin family.

It localises to the secreted. Functionally, growth hormone plays an important role in growth control and is involved in the regulation of several anabolic processes. Implicated as an osmoregulatory substance important for seawater adaptation. This chain is Somatotropin (gh), found in Acanthopagrus latus (Yellowfin seabream).